A 244-amino-acid chain; its full sequence is Haloacid dehalogenase-like hydrolase domain-containing protein Sgpp (244 aa).

Catalysis depends on D28, which acts as the Nucleophile. Positions 28, 30, and 189 each coordinate Mg(2+). The active-site Proton donor is D30.

The protein belongs to the HAD-like hydrolase superfamily. DOG/GPP family. Requires Mg(2+) as cofactor. In terms of tissue distribution, ubiquitous with highest expression in flowers.

Functionally, acts as a phosphosugar phosphatase on a broad range of sugar phosphate substrates with preferential activity on D-ribose-5-phosphate, 2-deoxy-D-ribose-5-phosphate, 2-deoxy-D-glucose-6-phosphate, and D-mannose-6-phosphate and with a lower activity on D-fructose-1-phosphate, D-glucose-6-phosphate, DL-glycerol-3-phosphate, and D-fructose-6-phosphate. The protein is Haloacid dehalogenase-like hydrolase domain-containing protein Sgpp (SGPP) of Arabidopsis thaliana (Mouse-ear cress).